We begin with the raw amino-acid sequence, 614 residues long: MSNLKKISDEDRESKFGYVFAVSGPVVTAERMSGSAMYELVRVGYYELVGEIIRLEGDMATIQVYEETSGVTVGDPVLRTGKPLSVELGPGIMGSIFDGIQRPLKDINEMTSSIYIPKGINVPCLSRTQSWSFNPLNVKAGSHITGGDLYGIVHENTLVKHKLMVPPRAKGTVKYIAPSGNYTVDDVILETEFDGEISKFTMLQVWPVRQPRPVTEKLPANHPLLTGQRVLDSLFPCVQGGTTAIPGAFGCGKTVISQSLSKYSNSDVIVYVGCGERGNEMSEVLRDFPELSVEIDGVTESIMKRTALVANTSNMPVAAREASIYTGITLSEYFRDMGYNVSMMADSTSRWAEALREISGRLAEMPADSGYPAYLGARLASFYERAGRVKCLGNPEREGSVSIVGAVSPPGGDFSDPVTSATLGIVQVFWGLDKKLAQRKHFPSINWLISYSKYMRALEDFYDKNFPEFVPMRTKVKEILQEEEDLSEIVQLVGKASLAETDKITLEVAKLLKDDFLQQNSYSAYDRFCPFYKTVGMLKNMIGFYDMARHAVETTAQSENKITWNVIRDSMGQILYQLSSMKFKDPVKDGEPKIKADFDQLYEDMQQAFRNLED.

Gly247–Thr254 contacts ATP.

This sequence belongs to the ATPase alpha/beta chains family. In terms of assembly, V-ATPase is a heteromultimeric enzyme made up of two complexes: the ATP-hydrolytic V1 complex and the proton translocation V0 complex. The V1 complex consists of three catalytic AB heterodimers that form a heterohexamer, three peripheral stalks each consisting of EG heterodimers, one central rotor including subunits D and F, and the regulatory subunits C and H. The proton translocation complex V0 consists of the proton transport subunit a, a ring of proteolipid subunits c9c'', rotary subunit d, subunits e and f, and the accessory subunits VhaAC45 and ATP6AP2.

The catalysed reaction is ATP + H2O + 4 H(+)(in) = ADP + phosphate + 5 H(+)(out). With respect to regulation, ATP hydrolysis occurs at the interface between the nucleotide-binding domains of subunits A and B. ATP hydrolysis triggers a conformational change in the subunits D and F, which induces a shift of subunit d. The c-ring is subsequently rotated and results in a continuous proton translocation across the membrane. In terms of biological role, catalytic subunit of the V1 complex of vacuolar(H+)-ATPase (V-ATPase), a multisubunit enzyme composed of a peripheral complex (V1) that hydrolyzes ATP and a membrane integral complex (V0) that translocates protons. V-ATPase is responsible for acidifying and maintaining the pH of intracellular compartments and in some cell types, is targeted to the plasma membrane, where it is responsible for acidifying the extracellular environment. This is V-type proton ATPase catalytic subunit A from Anopheles gambiae (African malaria mosquito).